The primary structure comprises 234 residues: Probable transcriptional regulatory protein Psyr_3028 (234 aa).

It belongs to the TACO1 family.

The protein localises to the cytoplasm. This is Probable transcriptional regulatory protein Psyr_3028 from Pseudomonas syringae pv. syringae (strain B728a).